Here is a 311-residue protein sequence, read N- to C-terminus: GTP cyclohydrolase MptA (311 aa).

Belongs to the GTP cyclohydrolase IV family. In terms of assembly, homodimer. Fe(2+) is required as a cofactor.

The catalysed reaction is GTP + H2O = 7,8-dihydroneopterin 2',3'-cyclic phosphate + formate + diphosphate + H(+). It participates in cofactor biosynthesis; 5,6,7,8-tetrahydromethanopterin biosynthesis. Its function is as follows. Converts GTP to 7,8-dihydro-D-neopterin 2',3'-cyclic phosphate, the first intermediate in the biosynthesis of coenzyme methanopterin. This Methanobrevibacter smithii (strain ATCC 35061 / DSM 861 / OCM 144 / PS) protein is GTP cyclohydrolase MptA.